Reading from the N-terminus, the 157-residue chain is SsrA-binding protein (157 aa).

It belongs to the SmpB family.

The protein resides in the cytoplasm. In terms of biological role, required for rescue of stalled ribosomes mediated by trans-translation. Binds to transfer-messenger RNA (tmRNA), required for stable association of tmRNA with ribosomes. tmRNA and SmpB together mimic tRNA shape, replacing the anticodon stem-loop with SmpB. tmRNA is encoded by the ssrA gene; the 2 termini fold to resemble tRNA(Ala) and it encodes a 'tag peptide', a short internal open reading frame. During trans-translation Ala-aminoacylated tmRNA acts like a tRNA, entering the A-site of stalled ribosomes, displacing the stalled mRNA. The ribosome then switches to translate the ORF on the tmRNA; the nascent peptide is terminated with the 'tag peptide' encoded by the tmRNA and targeted for degradation. The ribosome is freed to recommence translation, which seems to be the essential function of trans-translation. This chain is SsrA-binding protein, found in Christiangramia forsetii (strain DSM 17595 / CGMCC 1.15422 / KT0803) (Gramella forsetii).